Consider the following 213-residue polypeptide: Orotate phosphoribosyltransferase (213 aa).

Lys-26 provides a ligand contact to 5-phospho-alpha-D-ribose 1-diphosphate. 34 to 35 (FF) contributes to the orotate binding site. Residues 72–73 (YK), Arg-98, Lys-99, Lys-102, and 123–131 (DDVISAGTS) contribute to the 5-phospho-alpha-D-ribose 1-diphosphate site. 2 residues coordinate orotate: Ser-127 and Arg-155.

This sequence belongs to the purine/pyrimidine phosphoribosyltransferase family. PyrE subfamily. Homodimer. Mg(2+) is required as a cofactor.

It catalyses the reaction orotidine 5'-phosphate + diphosphate = orotate + 5-phospho-alpha-D-ribose 1-diphosphate. It functions in the pathway pyrimidine metabolism; UMP biosynthesis via de novo pathway; UMP from orotate: step 1/2. In terms of biological role, catalyzes the transfer of a ribosyl phosphate group from 5-phosphoribose 1-diphosphate to orotate, leading to the formation of orotidine monophosphate (OMP). The chain is Orotate phosphoribosyltransferase from Neisseria gonorrhoeae (strain NCCP11945).